A 311-amino-acid chain; its full sequence is Olfactory receptor 10G9 (311 aa).

Residues 1 to 23 lie on the Extracellular side of the membrane; sequence MSKTSLVTAFILTGLPHAPGLDA. The chain crosses the membrane as a helical span at residues 24–44; that stretch reads PLFGIFLVVYVLTVLGNLLIL. The Cytoplasmic segment spans residues 45–52; the sequence is LVIRVDSH. A helical transmembrane segment spans residues 53–73; the sequence is LHTPMYYFLTNLSFIDMWFST. Over 74–98 the chain is Extracellular; that stretch reads VTVPKMLMTLVSPSGRAISFHSCVA. Cys-96 and Cys-188 form a disulfide bridge. The helical transmembrane segment at 99-119 threads the bilayer; the sequence is QLYFFHFLGSTECFLYTVMSY. Over 120 to 138 the chain is Cytoplasmic; sequence DRYLAISYPLRYTSMMSGS. The helical transmembrane segment at 139-159 threads the bilayer; it reads RCALLATSTWLSGSLHSAVQT. The Extracellular portion of the chain corresponds to 160–196; it reads ILTFHLPYCGPNQIQHYLCDAPPILKLACADTSANEM. A helical membrane pass occupies residues 197–216; it reads VIFVDIGLVASGCFLLIVLS. The Cytoplasmic segment spans residues 217–236; sequence YVSIVCSILRIHTSEGRHRA. The chain crosses the membrane as a helical span at residues 237-257; it reads FQTCASHCIVVLCFFVPCVFI. Residues 258–268 lie on the Extracellular side of the membrane; sequence YLRPGSRDVVD. A helical membrane pass occupies residues 269 to 289; that stretch reads GVVAIFYTVLTPLLNPVVYTL. At 290–311 the chain is on the cytoplasmic side; sequence RNKEVKKAVLKLRDKVAHSQGE.

The protein belongs to the G-protein coupled receptor 1 family.

The protein resides in the cell membrane. Odorant receptor. This Homo sapiens (Human) protein is Olfactory receptor 10G9 (OR10G9).